The sequence spans 342 residues: MNTADFDFHLPEELIAQTPLEKRDASKLLIVNRETGEMQDKHFHSIIDMLEPGDALVMNDTRVLPARLYGQKVETGGHVELLLLKNTSGDEWEVLAKPAKRLKVGTRISFGDGRLSAVVTEELTHGGRIVRFEYQGIFLEVLESLGEMPLPPYIHEKLDDRERYQTVYAKESGSAAAPTAGLHFTKELLAEIQAKGVHLVYLTLHVGLGTFRPVSVDNLDEHEMHSEFYQLSEEAAATLRSVKKNGGRVIAVGTTSIRTLETIGSKFDGQIQADSGWTNIFIKPGYEWKVVDAFSTNFHLPKSTLVMLVSAFAGRELVLDAYHHSIQEHYRFFSFGDAMFIY.

It belongs to the QueA family. In terms of assembly, monomer.

It is found in the cytoplasm. It carries out the reaction 7-aminomethyl-7-carbaguanosine(34) in tRNA + S-adenosyl-L-methionine = epoxyqueuosine(34) in tRNA + adenine + L-methionine + 2 H(+). The protein operates within tRNA modification; tRNA-queuosine biosynthesis. Its function is as follows. Transfers and isomerizes the ribose moiety from AdoMet to the 7-aminomethyl group of 7-deazaguanine (preQ1-tRNA) to give epoxyqueuosine (oQ-tRNA). The sequence is that of S-adenosylmethionine:tRNA ribosyltransferase-isomerase from Streptococcus pneumoniae serotype 4 (strain ATCC BAA-334 / TIGR4).